The chain runs to 152 residues: Ribosome maturation factor RimP (152 aa).

Belongs to the RimP family.

The protein resides in the cytoplasm. Its function is as follows. Required for maturation of 30S ribosomal subunits. This Fervidobacterium nodosum (strain ATCC 35602 / DSM 5306 / Rt17-B1) protein is Ribosome maturation factor RimP.